We begin with the raw amino-acid sequence, 378 residues long: Erythronate-4-phosphate dehydrogenase (378 aa).

Residues Ser-45 and Thr-66 each contribute to the substrate site. Positions 146 and 175 each coordinate NAD(+). Residue Arg-208 is part of the active site. Asp-232 contacts NAD(+). Glu-237 is an active-site residue. Residue His-254 is the Proton donor of the active site. Gly-257 provides a ligand contact to NAD(+). Substrate is bound at residue Tyr-258.

This sequence belongs to the D-isomer specific 2-hydroxyacid dehydrogenase family. PdxB subfamily. As to quaternary structure, homodimer.

It is found in the cytoplasm. The enzyme catalyses 4-phospho-D-erythronate + NAD(+) = (R)-3-hydroxy-2-oxo-4-phosphooxybutanoate + NADH + H(+). Its pathway is cofactor biosynthesis; pyridoxine 5'-phosphate biosynthesis; pyridoxine 5'-phosphate from D-erythrose 4-phosphate: step 2/5. Catalyzes the oxidation of erythronate-4-phosphate to 3-hydroxy-2-oxo-4-phosphonooxybutanoate. The chain is Erythronate-4-phosphate dehydrogenase from Escherichia coli O7:K1 (strain IAI39 / ExPEC).